The sequence spans 858 residues: Ubiquitin carboxyl-terminal hydrolase 13 (858 aa).

Residue Ser112 is modified to Phosphoserine. The UBP-type; degenerate zinc-finger motif lies at 185-293 (PVSKYANNLV…KHLAHFGIDM (109 aa)). Zn(2+) contacts are provided by Cys209, Cys212, Cys229, and His242. Lys309 participates in a covalent cross-link: Glycyl lysine isopeptide (Lys-Gly) (interchain with G-Cter in SUMO2). One can recognise a USP domain in the interval 334-856 (TGLKNLGNSC…LGYMYFYRRI (523 aa)). Cys343 serves as the catalytic Nucleophile. Lys403 is covalently cross-linked (Glycyl lysine isopeptide (Lys-Gly) (interchain with G-Cter in SUMO2)). 2 UBA domains span residues 650–691 (DIDE…IIVH) and 722–762 (QPPE…IFSH). The active-site Proton acceptor is the His818.

Belongs to the peptidase C19 family. As to quaternary structure, interacts with UFD1. Interacts (via UBA domains) with SIAH2 (when ubiquitinated). Interacts with BAG6; the interaction is direct and may mediate UBL4A deubiquitination. Interacts (via UBA 2 domain) with AMFR; the interaction is direct. Interacts with UBL4A; may be indirect via BAG6. Interacts with NEDD4.

It is found in the cytoplasm. The enzyme catalyses Thiol-dependent hydrolysis of ester, thioester, amide, peptide and isopeptide bonds formed by the C-terminal Gly of ubiquitin (a 76-residue protein attached to proteins as an intracellular targeting signal).. Specifically inhibited by spautin-1 (specific and potent autophagy inhibitor-1), a derivative of MBCQ that binds to USP13 and inhibits deubiquitinase activity. Regulated by PIK3C3/VPS34-containing complexes. The weak deubiquitinase activity in vitro suggests the existence of some mechanism that activates the enzyme. Its function is as follows. Deubiquitinase that mediates deubiquitination of target proteins such as BECN1, MITF, SKP2 and USP10 and is involved in various processes such as autophagy, endoplasmic reticulum-associated degradation (ERAD), cell cycle progression or DNA damage response. Component of a regulatory loop that controls autophagy and p53/TP53 levels: mediates deubiquitination of BECN1, a key regulator of autophagy, leading to stabilize the PIK3C3/VPS34-containing complexes. Alternatively, forms with NEDD4 a deubiquitination complex, which subsequently stabilizes VPS34 to promote autophagy. Also deubiquitinates USP10, an essential regulator of p53/TP53 stability. In turn, PIK3C3/VPS34-containing complexes regulate USP13 stability, suggesting the existence of a regulatory system by which PIK3C3/VPS34-containing complexes regulate p53/TP53 protein levels via USP10 and USP13. Recruited by nuclear UFD1 and mediates deubiquitination of SKP2, thereby regulating endoplasmic reticulum-associated degradation (ERAD). Also regulates ERAD through the deubiquitination of UBL4A a component of the BAG6/BAT3 complex. Mediates stabilization of SIAH2 independently of deubiquitinase activity: binds ubiquitinated SIAH2 and acts by impairing SIAH2 autoubiquitination. Regulates the cell cycle progression by stabilizing cell cycle proteins such as SKP2 and AURKB. In addition, plays an important role in maintaining genomic stability and in DNA replication checkpoint activation via regulation of RAP80 and TOPBP1. Deubiquitinates the multifunctional protein HMGB1 and subsequently drives its nucleocytoplasmic localization and its secretion. Positively regulates type I and type II interferon signalings by deubiquitinating STAT1 but negatively regulates antiviral response by deubiquitinating STING1. This chain is Ubiquitin carboxyl-terminal hydrolase 13 (Usp13), found in Mus musculus (Mouse).